A 347-amino-acid polypeptide reads, in one-letter code: Phosphoribosylformylglycinamidine cyclo-ligase (347 aa).

It belongs to the AIR synthase family.

It is found in the cytoplasm. It carries out the reaction 2-formamido-N(1)-(5-O-phospho-beta-D-ribosyl)acetamidine + ATP = 5-amino-1-(5-phospho-beta-D-ribosyl)imidazole + ADP + phosphate + H(+). The protein operates within purine metabolism; IMP biosynthesis via de novo pathway; 5-amino-1-(5-phospho-D-ribosyl)imidazole from N(2)-formyl-N(1)-(5-phospho-D-ribosyl)glycinamide: step 2/2. This is Phosphoribosylformylglycinamidine cyclo-ligase from Yersinia pestis.